We begin with the raw amino-acid sequence, 469 residues long: Hydrogen cyanide synthase subunit HcnB (469 aa).

In terms of assembly, heterotrimer of HcnA, HcnB and HcnC.

Its subcellular location is the cell membrane. It carries out the reaction glycine + 2 A = hydrogen cyanide + 2 AH2 + CO2. A three-component membrane-bound flavoenzyme that catalyzes the formation of hydrogen cyanide, a secondary metabolite, by transfer of electrons to a cyanide-resistant branch of the aerobic respiratory chain. Contributes to suppression of black root rot of tobacco. This chain is Hydrogen cyanide synthase subunit HcnB, found in Pseudomonas protegens (strain DSM 19095 / LMG 27888 / CFBP 6595 / CHA0).